We begin with the raw amino-acid sequence, 199 residues long: uncharacterized protein (199 aa).

A run of 7 helical transmembrane segments spans residues 10–32 (LTSQAAVLTSLVVIGLILCFIGY), 37–59 (VYSAVIGLFIGQLVGIYITINYY), 63–80 (LIVILASAIVGALLFALI), 83–100 (LGLIVTGAAFGYFVGVYL), 104–121 (YQVYAFVLAALFALINLF), 126–148 (LTVLITSVIGASAIALAVHMGIT), and 163–185 (FDAIFSNAYFDLLWFTLVLTGII).

The protein localises to the cell membrane. This is an uncharacterized protein from Archaeoglobus fulgidus (strain ATCC 49558 / DSM 4304 / JCM 9628 / NBRC 100126 / VC-16).